The primary structure comprises 347 residues: E3 ubiquitin-protein ligase RNF146-B (347 aa).

The RING-type zinc finger occupies 37–75 (CAICLQTCVHPVSLPCKHVFCYLCVKGASWLGKRCALCR). Glycyl lysine isopeptide (Lys-Gly) (interchain with G-Cter in ubiquitin) cross-links involve residues lysine 85, lysine 95, lysine 131, and lysine 176. Residues 92–168 (EELKAASRGN…EHGRRRKIKR (77 aa)) form the WWE domain. Disordered stretches follow at residues 196 to 241 (SSAD…GTSL) and 257 to 347 (ERSH…VTEV). Positions 203 to 217 (SVPAQSGASVQSSSV) are enriched in low complexity. Residues 282-296 (SIEETESDASSDSED) are compositionally biased toward acidic residues. Serine 288 and serine 292 each carry phosphoserine. Residues 304-322 (HSLTQQRLLVPNPSQTVSD) are compositionally biased toward polar residues.

In terms of assembly, interacts with poly-ADP-ribosylated AXIN1, AXIN2, BLZF1 and CASC3. In terms of processing, ubiquitinated; autoubiquitinated. Autoubiquitination is enhanced upon poly(ADP-ribose)-binding.

The protein localises to the cytoplasm. The protein resides in the cytosol. It carries out the reaction S-ubiquitinyl-[E2 ubiquitin-conjugating enzyme]-L-cysteine + [acceptor protein]-L-lysine = [E2 ubiquitin-conjugating enzyme]-L-cysteine + N(6)-ubiquitinyl-[acceptor protein]-L-lysine.. The protein operates within protein modification; protein ubiquitination. Its function is as follows. E3 ubiquitin-protein ligase that specifically binds poly-ADP-ribosylated proteins and mediates their ubiquitination and subsequent degradation. Acts as an activator of the Wnt signaling pathway by mediating the ubiquitination of poly-ADP-ribosylated AXIN1 and AXIN2, 2 key components of the beta-catenin destruction complex. Acts in cooperation with tankyrase proteins (TNKS and TNKS2), which mediate poly-ADP-ribosylation of target proteins AXIN1, AXIN2, BLZF1, CASC3, TNKS and TNKS2. Recognizes and binds tankyrase-dependent poly-ADP-ribosylated proteins via its WWE domain and mediates their ubiquitination. In Bos taurus (Bovine), this protein is E3 ubiquitin-protein ligase RNF146-B (RNF146B).